Consider the following 350-residue polypeptide: Dihydroorotase (350 aa).

Zn(2+) contacts are provided by His-17 and His-19. Residues His-19 to Arg-21 and Asn-45 each bind substrate. Zn(2+) is bound by residues Lys-103, His-140, and His-178. Lys-103 carries the post-translational modification N6-carboxylysine. Residue His-140 coordinates substrate. Position 223 (Leu-223) interacts with substrate. Asp-251 contacts Zn(2+). Residue Asp-251 is part of the active site. Positions 255 and 267 each coordinate substrate.

The protein belongs to the metallo-dependent hydrolases superfamily. DHOase family. Class II DHOase subfamily. As to quaternary structure, homodimer. Zn(2+) is required as a cofactor.

The catalysed reaction is (S)-dihydroorotate + H2O = N-carbamoyl-L-aspartate + H(+). Its pathway is pyrimidine metabolism; UMP biosynthesis via de novo pathway; (S)-dihydroorotate from bicarbonate: step 3/3. Catalyzes the reversible cyclization of carbamoyl aspartate to dihydroorotate. The sequence is that of Dihydroorotase from Photorhabdus laumondii subsp. laumondii (strain DSM 15139 / CIP 105565 / TT01) (Photorhabdus luminescens subsp. laumondii).